Here is a 283-residue protein sequence, read N- to C-terminus: Demethylrebeccamycin-D-glucose O-methyltransferase (283 aa).

Residues Ser-101, Gln-106, 129 to 130 (DA), Leu-146, and His-151 contribute to the S-adenosyl-L-methionine site.

The protein belongs to the methyltransferase superfamily. In terms of assembly, monomer.

It catalyses the reaction 4'-demethylrebeccamycin + S-adenosyl-L-methionine = rebeccamycin + S-adenosyl-L-homocysteine + H(+). Its function is as follows. Glycosyl O-methyltransferase that catalyzes the final step in the biosynthesis of rebeccamycin, an indolocarbazole alkaloid that inhibits topoisomerase 1. Has broad substrate specificity and functions as glycosyl O-methyltransferase on a number of rebeccamycin analogs. This chain is Demethylrebeccamycin-D-glucose O-methyltransferase (rebM), found in Lentzea aerocolonigenes (Lechevalieria aerocolonigenes).